The sequence spans 356 residues: tRNA N6-adenosine threonylcarbamoyltransferase (356 aa).

The Fe cation site is built by His-116 and His-120. Substrate is bound by residues 139-143 (IVSGG), Asp-174, Gly-187, Asp-191, and Asn-281. Position 309 (Asp-309) interacts with Fe cation.

The protein belongs to the KAE1 / TsaD family. Fe(2+) is required as a cofactor.

The protein localises to the cytoplasm. It catalyses the reaction L-threonylcarbamoyladenylate + adenosine(37) in tRNA = N(6)-L-threonylcarbamoyladenosine(37) in tRNA + AMP + H(+). Its function is as follows. Required for the formation of a threonylcarbamoyl group on adenosine at position 37 (t(6)A37) in tRNAs that read codons beginning with adenine. Is involved in the transfer of the threonylcarbamoyl moiety of threonylcarbamoyl-AMP (TC-AMP) to the N6 group of A37, together with TsaE and TsaB. TsaD likely plays a direct catalytic role in this reaction. The polypeptide is tRNA N6-adenosine threonylcarbamoyltransferase (Frankia alni (strain DSM 45986 / CECT 9034 / ACN14a)).